A 101-amino-acid chain; its full sequence is NAD(P)H-quinone oxidoreductase subunit 4L, chloroplastic (101 aa).

Helical transmembrane passes span 2-22 (IFEH…YGLI), 32-52 (MCLE…SDFF), and 61-81 (IFSI…PAIV).

Belongs to the complex I subunit 4L family. In terms of assembly, NDH is composed of at least 16 different subunits, 5 of which are encoded in the nucleus.

The protein localises to the plastid. It localises to the chloroplast thylakoid membrane. The enzyme catalyses a plastoquinone + NADH + (n+1) H(+)(in) = a plastoquinol + NAD(+) + n H(+)(out). It catalyses the reaction a plastoquinone + NADPH + (n+1) H(+)(in) = a plastoquinol + NADP(+) + n H(+)(out). Its function is as follows. NDH shuttles electrons from NAD(P)H:plastoquinone, via FMN and iron-sulfur (Fe-S) centers, to quinones in the photosynthetic chain and possibly in a chloroplast respiratory chain. The immediate electron acceptor for the enzyme in this species is believed to be plastoquinone. Couples the redox reaction to proton translocation, and thus conserves the redox energy in a proton gradient. The protein is NAD(P)H-quinone oxidoreductase subunit 4L, chloroplastic of Glycine max (Soybean).